The chain runs to 303 residues: MTIKDWYKLTFLIESDSEEIIIWKLNELGIFSFSFEYLIKNKNKKEVNIWLPVADWSESSRFGVEKIITKLLNINAPTNQFFDWSIIKEEDWLTSWKKYWAPELVGNHFLILPCWINLNEKFKDKKIIKIDPGAAFGTGSHPSTYLCLEKMDNILFSDKKILDIGSGSGILSVAARLLGAKEVCAVDNDYLAINATKSNFQLNFGNLNNLNTYLGSFNEVILKNQLKQFDFVLCNILAEVIKEMIPNIYKCLRNNGEVIFSGILNSQKDEIIKILIQNDLKLLDVSTRKDWACISAQKASDPT.

The S-adenosyl-L-methionine site is built by threonine 144, glycine 165, aspartate 187, and asparagine 235.

It belongs to the methyltransferase superfamily. PrmA family.

It localises to the cytoplasm. The enzyme catalyses L-lysyl-[protein] + 3 S-adenosyl-L-methionine = N(6),N(6),N(6)-trimethyl-L-lysyl-[protein] + 3 S-adenosyl-L-homocysteine + 3 H(+). Its function is as follows. Methylates ribosomal protein L11. In Prochlorococcus marinus (strain AS9601), this protein is Ribosomal protein L11 methyltransferase.